A 481-amino-acid polypeptide reads, in one-letter code: Ribosomal protein uS12 methylthiotransferase RimO (481 aa).

The MTTase N-terminal domain maps to Asn38–Pro148. 6 residues coordinate [4Fe-4S] cluster: Cys47, Cys83, Cys112, Cys180, Cys184, and Cys187. Positions Leu166 to Glu403 constitute a Radical SAM core domain. Residues Ala406–Asp472 form the TRAM domain.

It belongs to the methylthiotransferase family. RimO subfamily. It depends on [4Fe-4S] cluster as a cofactor.

It localises to the cytoplasm. The enzyme catalyses L-aspartate(89)-[ribosomal protein uS12]-hydrogen + (sulfur carrier)-SH + AH2 + 2 S-adenosyl-L-methionine = 3-methylsulfanyl-L-aspartate(89)-[ribosomal protein uS12]-hydrogen + (sulfur carrier)-H + 5'-deoxyadenosine + L-methionine + A + S-adenosyl-L-homocysteine + 2 H(+). Catalyzes the methylthiolation of an aspartic acid residue of ribosomal protein uS12. This is Ribosomal protein uS12 methylthiotransferase RimO from Shewanella oneidensis (strain ATCC 700550 / JCM 31522 / CIP 106686 / LMG 19005 / NCIMB 14063 / MR-1).